Here is a 46-residue protein sequence, read N- to C-terminus: Myoregulin (46 aa).

Over Met1 to Ile21 the chain is Cytoplasmic. Residues Val22–Val42 form a helical membrane-spanning segment. The Lumenal segment spans residues Val43 to Ser46.

As to quaternary structure, homooligomer. Monomer. Interacts with ATP2A1/SERCA1. Interacts as a monomer with ATP2A2/SERCA2; the interaction inhibits ATP2A2 activity.

The protein resides in the sarcoplasmic reticulum membrane. Inhibits the activity of ATP2A1/SERCA1 ATPase in sarcoplasmic reticulum by decreasing the apparent affinity of the ATPase for Ca(2+), thereby acting as a key regulator of skeletal muscle activity. Its high expression in adult skeletal muscle, suggests that it constitutes the predominant regulator of ATP2A1/SERCA1 in adult skeletal muscle. Also inhibits the activity of ATP2A2/SERCA2 and ATP2A3/SERCA3. The polypeptide is Myoregulin (Homo sapiens (Human)).